Consider the following 1328-residue polypeptide: MAPPEIGNDEIPLQEFGQKSFAADNTIGGMQSISYDNSGAPMGLYKEKKGMYVTARNLSMSIGTEKKGDKRNILSDLNFFLKPGSMVLILGSPGCGKTSVMKALANQLHSETVSGSLLFNGKAANKSTHHRDVAYVVQGDHHMAPFTVRETFKFSADLQMSEGTSEEEKNARVDYILKTLDLTRQQDTVVGNEFLRGVSGGQKKRVTIGVEMVKDAGLFLMDEPSTGLDSTTTLELMKHFRELSNVNQVSSLVALLQPGVEVTKLFDFLMIMNAGHMVYFGPMSDAISYFEGLGFKLPKHHNPAEFFQEIVDEPELYFEGEGEPPLRGAEEFANAYKNSAMFQSIVNDLDNTQPDLTFCKDSSHLPKYPTPLSYQIRLASIRAFKMLISSQVAVRMRIIKSIVMGLILGSLFYGLDLNQTDGNNRSGLIFFSLLFIVFSGMGAIAILFEQREVFYIQKDGKYYKTFAFFLSLIFSEIPIALLETVVFCVLVYWMCGLQANAEKFIYFLLMNFVGDLAFQSFFKMVSAFAPNATLASVIAPAALAPFILFSGFMAPKRSIGGWWIWIYWISPIKYAFEGLMSNEHHGLIYSCDDSETIPPRNTPNFELPYPRGSGNSSICQITRGDQFLDQLGMPQNNWFKWIDLLIVFAFGALFSFGMYFFLKNVHVDHRASDPKNDKRSKKASKRSKKIKDSKVDIKENRMVKAQKEIPIGCYMQWKDLVYEVDVKKDGKNQRLRLLNEINGYVKPGMLLALMGPSGAGKSTLLDVLANRKTGGHTKGQILINGQERTKYFTRLSAYVEQFDVLPPTQTVKEAILFSAKTRLPSDMPNEEKIKFVENIIETLNLLKIQNKQIGHGEEGLSLSQRKRVNIGVELASDPQLLFLDEPTSGLDSSAALKVMNLIKKIASSGRSIICTIHQPSTSIFKQFDHLLLLKRGGETVYFGPTGDKSADLLGYFENHGLICDPLKNPADFILDVTDDVIETTLDGKPHQFHPVQQYKESQLNSDLLAKIDAGVMPVGTPVPEFHGVYSSSYQTQFVELGKRSWLAQVRRVQNIRTRLMRSLFLGVVLGTLFVRMEETQENIYNRVSILFFSLMFGGMSGMSSIPIVNMERGVFYREQASGMYSIPIYLFTFIVTDLPWVFLSAIIYTVPMYFISGLRLDPNGAPFFYHSFISFTTYFNFSMLAMVFATVLPTDEIAHALGGVALSISSLFAGFMIPPASIAKGWHWFYQLDPTTYPLAIVMINEFQDLEFHCTSSESVTIPNVLTVNGTYIDVGPICPITNGNQILQRYEMKPEDKYKFLAVIFGYSVFFFICIFIALKFIRHQTK.

One can recognise an ABC transporter 1 domain in the interval Val53–Lys299. Gly91–Thr98 is a binding site for ATP. Residues Ile388–Val665 enclose the ABC transmembrane type-2 1 domain. The next 7 membrane-spanning stretches (helical) occupy residues Ile398 to Asn418, Leu428 to Phe448, Ile477 to Leu497, Phe504 to Met524, Leu534 to Ala554, Ile559 to Leu579, and Ile642 to Leu662. Positions Arg670–Lys691 are disordered. The span at Lys678–Lys689 shows a compositional bias: basic residues. Residues Val721–Gly960 enclose the ABC transporter 2 domain. Residue Gly755–Ser762 coordinates ATP. Residues Val1049–Gln1286 form the ABC transmembrane type-2 2 domain. 6 helical membrane passes run Leu1059–Met1076, Val1087–Ile1107, Ile1128–Tyr1148, Phe1172–Leu1192, Ile1197–Ile1217, and Ala1303–Ile1323.

Belongs to the ABC transporter superfamily. ABCG family. PDR (TC 3.A.1.205) subfamily.

It localises to the endosome membrane. In terms of biological role, required for endocytosis and endosomal pH regulation. The protein is ABC transporter G family member 2 (abcG2) of Dictyostelium discoideum (Social amoeba).